The chain runs to 312 residues: Methionyl-tRNA formyltransferase (312 aa).

109-112 serves as a coordination point for (6S)-5,6,7,8-tetrahydrofolate; the sequence is SLLP.

It belongs to the Fmt family.

The enzyme catalyses L-methionyl-tRNA(fMet) + (6R)-10-formyltetrahydrofolate = N-formyl-L-methionyl-tRNA(fMet) + (6S)-5,6,7,8-tetrahydrofolate + H(+). Its function is as follows. Attaches a formyl group to the free amino group of methionyl-tRNA(fMet). The formyl group appears to play a dual role in the initiator identity of N-formylmethionyl-tRNA by promoting its recognition by IF2 and preventing the misappropriation of this tRNA by the elongation apparatus. The polypeptide is Methionyl-tRNA formyltransferase (Listeria monocytogenes serovar 1/2a (strain ATCC BAA-679 / EGD-e)).